Here is a 342-residue protein sequence, read N- to C-terminus: Zinc transporter ZIP11 (342 aa).

The next 7 membrane-spanning stretches (helical) occupy residues 12-32 (LLGTFFTWGMTAAGAALVFVF), 44-64 (LGFAAGVMLAASYWSLLAPAV), 72-92 (GFGAFAFFPVAVGFTLGAAFV), 194-214 (IALLILAITIHNVPEGLAVGV), 263-285 (FWYGQLSGMVEPLAGVFGAFAVV), 290-307 (ILPYALAFAAGAMVYVVM), and 322-342 (LASWASILGFVVMMSLDVGLG).

It belongs to the ZIP transporter (TC 2.A.5) family.

The protein localises to the cell membrane. It localises to the nucleus. Its subcellular location is the cytoplasm. It is found in the golgi apparatus. The enzyme catalyses Zn(2+)(in) = Zn(2+)(out). It catalyses the reaction Cu(2+)(in) = Cu(2+)(out). Functionally, zinc importer that regulates cytosolic zinc concentrations either via zinc influx from the extracellular compartment or efflux from intracellular organelles such as Golgi apparatus. May transport copper ions as well. The transport mechanism remains to be elucidated. The chain is Zinc transporter ZIP11 (SLC39A11) from Homo sapiens (Human).